Here is a 607-residue protein sequence, read N- to C-terminus: Glutamine--fructose-6-phosphate aminotransferase [isomerizing] (607 aa).

C2 acts as the Nucleophile; for GATase activity in catalysis. Positions 2–218 constitute a Glutamine amidotransferase type-2 domain; that stretch reads CGIIGYSGSK…DGDVVLVTKD (217 aa). 2 SIS domains span residues 280 to 424 and 457 to 597; these read FDEQ…KLGK and IAKK…VDKP. K602 acts as the For Fru-6P isomerization activity in catalysis.

As to quaternary structure, homodimer.

It is found in the cytoplasm. It catalyses the reaction D-fructose 6-phosphate + L-glutamine = D-glucosamine 6-phosphate + L-glutamate. Its function is as follows. Catalyzes the first step in hexosamine metabolism, converting fructose-6P into glucosamine-6P using glutamine as a nitrogen source. The polypeptide is Glutamine--fructose-6-phosphate aminotransferase [isomerizing] (Fusobacterium nucleatum subsp. nucleatum (strain ATCC 25586 / DSM 15643 / BCRC 10681 / CIP 101130 / JCM 8532 / KCTC 2640 / LMG 13131 / VPI 4355)).